The primary structure comprises 555 residues: WRKY transcription factor WRKY24 (555 aa).

Disordered stretches follow at residues 133 to 183 (TAPA…AGAN) and 197 to 248 (SEMA…CTFP). Residues 163–183 (QQQQQPWGYQQQPAGMDAGAN) are compositionally biased toward low complexity. The segment at residues 214-278 (SQRRSSDDGY…YKGTHNHAKP (65 aa)) is a DNA-binding region (WRKY 1). The Nuclear localization signal motif lies at 253-259 (KKKVERS). The interval 270–365 (KGTHNHAKPQ…DGEGISMAGN (96 aa)) is disordered. Polar residues-rich tracts occupy residues 277–294 (KPQN…QVLQ) and 310–320 (TAATPENSSAS). A compositionally biased stretch (basic and acidic residues) spans 347–356 (DSKRWRKDGD). The segment at residues 379 to 444 (SDIDILDDGY…YEGKHNHDVP (66 aa)) is a DNA-binding region (WRKY 2). The transcription repression of gibberellic acid (GA)-induced promoters stretch occupies residues 466 to 555 (HPYLPNQPPP…DDMFFQNSLY (90 aa)). Positions 514 to 555 (FDDARGSYMSQHQQQQRQNDAMHASRAKEEPGDDMFFQNSLY) are disordered.

It belongs to the WRKY group II-a family. In terms of tissue distribution, expressed in aleurone cells. Mostly expressed in aleurone layers and leaves, and, to a lower extent, in roots, panicles and embryos.

It localises to the nucleus. Transcription activator. Interacts specifically with the W box (5'-(T)TGAC[CT]-3'), a frequently occurring elicitor-responsive cis-acting element. Negative regulator of both gibberellic acid (GA) and abscisic acid (ABA) signaling in aleurone cells, probably by interfering with GAM1, via the specific repression of GA- and ABA-induced promoters. The chain is WRKY transcription factor WRKY24 from Oryza sativa subsp. japonica (Rice).